The sequence spans 89 residues: Small ribosomal subunit protein uS15 (89 aa).

Belongs to the universal ribosomal protein uS15 family. As to quaternary structure, part of the 30S ribosomal subunit. Forms a bridge to the 50S subunit in the 70S ribosome, contacting the 23S rRNA.

Its function is as follows. One of the primary rRNA binding proteins, it binds directly to 16S rRNA where it helps nucleate assembly of the platform of the 30S subunit by binding and bridging several RNA helices of the 16S rRNA. Functionally, forms an intersubunit bridge (bridge B4) with the 23S rRNA of the 50S subunit in the ribosome. The protein is Small ribosomal subunit protein uS15 of Orientia tsutsugamushi (strain Ikeda) (Rickettsia tsutsugamushi).